Here is a 78-residue protein sequence, read N- to C-terminus: Musculoskeletal embryonic nuclear protein 1 (78 aa).

Disordered regions lie at residues 1–33 (MSQPDPVKKKRPPVKEEDLKGARGNLSKNQEIK) and 45–78 (QMGSAAPSIFSRARTGSETVFEKSKDEPPKSVFG). Positions 6–14 (PVKKKRPPV) match the Nuclear localization signal motif. Over residues 64–78 (VFEKSKDEPPKSVFG) the composition is skewed to basic and acidic residues.

The protein belongs to the MUSTN1 family. In terms of tissue distribution, predominantly expressed in heart and skeletal muscle. Detected in skeletal muscle satellite cells where expression increases with cell proliferation.

The protein localises to the nucleus. Functionally, promotes the differentiation and proliferation of skeletal muscle satellite cells. In Gallus gallus (Chicken), this protein is Musculoskeletal embryonic nuclear protein 1 (MUSTN1).